A 499-amino-acid polypeptide reads, in one-letter code: Protein-cysteine N-palmitoyltransferase HHAT (499 aa).

The Cytoplasmic portion of the chain corresponds to M1–W5. A helical membrane pass occupies residues E6–F22. The Lumenal segment spans residues Y23 to G67. The chain crosses the membrane as a helical span at residues K68–L84. At A85–P94 the chain is on the cytoplasmic side. The segment at K91–V155 is essential for palmitoylation of SHH. An intramembrane segment occupies W95–L119. Over H120–R131 the chain is Cytoplasmic. A helical transmembrane segment spans residues S132 to R148. Over L149–T162 the chain is Lumenal. The helical transmembrane segment at E163–F183 threads the bilayer. The Cytoplasmic portion of the chain corresponds to S184–P208. The S-palmitoyl cysteine moiety is linked to residue C188. Residues W209 to G223 lie within the membrane without spanning it. Over P224–I249 the chain is Cytoplasmic. Residue C248 is the site of S-palmitoyl cysteine attachment. Residues V250–Y277 form a helical membrane-spanning segment. The Lumenal segment spans residues S278–S287. Residues C288–L316 form a helical membrane-spanning segment. At M317 to G369 the chain is on the cytoplasmic side. C330 is lipidated: S-palmitoyl cysteine. Residues T370–G386 traverse the membrane as a helical segment. Residue H385 is part of the active site. Residues S387 to E389 are Lumenal-facing. The helical transmembrane segment at D390–E405 threads the bilayer. Residues S406–L433 lie on the Cytoplasmic side of the membrane. A lipid anchor (S-palmitoyl cysteine) is attached at C416. The chain crosses the membrane as a helical span at residues H434 to G454. Residue G454–T461 participates in GTP binding. Over G455–L468 the chain is Lumenal. The helical transmembrane segment at Q469–H487 threads the bilayer. Topologically, residues V488–L499 are cytoplasmic.

This sequence belongs to the membrane-bound acyltransferase family. HHAT subfamily.

The protein localises to the endoplasmic reticulum membrane. It is found in the golgi apparatus membrane. The enzyme catalyses N-terminal L-cysteinyl-[protein] + hexadecanoyl-CoA = N-terminal N-hexadecanoyl-L-cysteinyl-[protein] + CoA + H(+). The catalysed reaction is N-terminal L-cysteinyl-[protein]-C-terminal glycyl cholesterol ester + hexadecanoyl-CoA = N-terminal N-hexadecanoyl-L-cysteinyl-[protein]-C-terminal glycyl cholesterol ester + CoA + H(+). Functionally, palmitoyl acyltransferase that catalyzes N-terminal palmitoylation of SHH; which is required for SHH signaling during limb development. It also catalyzes N-terminal palmitoylation of DHH. Promotes the transfer of palmitoyl-CoA from the cytoplasmic to the luminal side of the endoplasmic reticulum membrane, where SHH palmitoylation occurs. Plays a role in proper testis cord formation and the differentiation of Leydig cells. The protein is Protein-cysteine N-palmitoyltransferase HHAT (Hhat) of Mus musculus (Mouse).